Reading from the N-terminus, the 98-residue chain is MSLTYMNMFMAFTISLLGLLMYRAHMMSSLLCLEGMMLSLFVMMTMTILNTHLTLASMIPIILLVFAACEAALGLSLLVMVSTTYGMDYVQNLNLLQC.

3 consecutive transmembrane segments (helical) span residues 1–21 (MSLT…GLLM), 29–49 (SLLC…MTIL), and 61–81 (IILL…LVMV).

It belongs to the complex I subunit 4L family. In terms of assembly, core subunit of respiratory chain NADH dehydrogenase (Complex I) which is composed of 45 different subunits.

It is found in the mitochondrion inner membrane. It carries out the reaction a ubiquinone + NADH + 5 H(+)(in) = a ubiquinol + NAD(+) + 4 H(+)(out). In terms of biological role, core subunit of the mitochondrial membrane respiratory chain NADH dehydrogenase (Complex I) which catalyzes electron transfer from NADH through the respiratory chain, using ubiquinone as an electron acceptor. Part of the enzyme membrane arm which is embedded in the lipid bilayer and involved in proton translocation. This chain is NADH-ubiquinone oxidoreductase chain 4L (MT-ND4L), found in Vampyressa brocki (Brock's yellow-eared bat).